Consider the following 298-residue polypeptide: ATP phosphoribosyltransferase (298 aa).

The protein belongs to the ATP phosphoribosyltransferase family. Long subfamily. Mg(2+) is required as a cofactor.

The protein resides in the cytoplasm. It carries out the reaction 1-(5-phospho-beta-D-ribosyl)-ATP + diphosphate = 5-phospho-alpha-D-ribose 1-diphosphate + ATP. It participates in amino-acid biosynthesis; L-histidine biosynthesis; L-histidine from 5-phospho-alpha-D-ribose 1-diphosphate: step 1/9. Its activity is regulated as follows. Feedback inhibited by histidine. Functionally, catalyzes the condensation of ATP and 5-phosphoribose 1-diphosphate to form N'-(5'-phosphoribosyl)-ATP (PR-ATP). Has a crucial role in the pathway because the rate of histidine biosynthesis seems to be controlled primarily by regulation of HisG enzymatic activity. In Vibrio campbellii (strain ATCC BAA-1116), this protein is ATP phosphoribosyltransferase.